A 48-amino-acid chain; its full sequence is 4-carboxymuconolactone decarboxylase (48 aa).

The protein belongs to the carboxymuconolactone decarboxylase family.

The enzyme catalyses (R)-2-(carboxymethyl)-5-oxo-2,5-dihydro-2-furoate + H(+) = (4,5-dihydro-5-oxofuran-2-yl)-acetate + CO2. It functions in the pathway aromatic compound metabolism; beta-ketoadipate pathway; 5-oxo-4,5-dihydro-2-furylacetate from 3-carboxy-cis,cis-muconate: step 2/2. In Pseudomonas putida (Arthrobacter siderocapsulatus), this protein is 4-carboxymuconolactone decarboxylase.